Consider the following 486-residue polypeptide: UDP-N-acetylmuramate--L-alanine ligase (486 aa).

126–132 (GTHGKTT) serves as a coordination point for ATP.

It belongs to the MurCDEF family.

It localises to the cytoplasm. The catalysed reaction is UDP-N-acetyl-alpha-D-muramate + L-alanine + ATP = UDP-N-acetyl-alpha-D-muramoyl-L-alanine + ADP + phosphate + H(+). It functions in the pathway cell wall biogenesis; peptidoglycan biosynthesis. In terms of biological role, cell wall formation. The sequence is that of UDP-N-acetylmuramate--L-alanine ligase from Pectobacterium atrosepticum (strain SCRI 1043 / ATCC BAA-672) (Erwinia carotovora subsp. atroseptica).